Here is a 419-residue protein sequence, read N- to C-terminus: Serine hydroxymethyltransferase (419 aa).

Residues Leu-121 and 125 to 127 contribute to the (6S)-5,6,7,8-tetrahydrofolate site; that span reads GHL. Residue Lys-231 is modified to N6-(pyridoxal phosphate)lysine.

It belongs to the SHMT family. As to quaternary structure, homodimer. Pyridoxal 5'-phosphate serves as cofactor.

The protein resides in the cytoplasm. The catalysed reaction is (6R)-5,10-methylene-5,6,7,8-tetrahydrofolate + glycine + H2O = (6S)-5,6,7,8-tetrahydrofolate + L-serine. It functions in the pathway one-carbon metabolism; tetrahydrofolate interconversion. The protein operates within amino-acid biosynthesis; glycine biosynthesis; glycine from L-serine: step 1/1. In terms of biological role, catalyzes the reversible interconversion of serine and glycine with tetrahydrofolate (THF) serving as the one-carbon carrier. This reaction serves as the major source of one-carbon groups required for the biosynthesis of purines, thymidylate, methionine, and other important biomolecules. Also exhibits THF-independent aldolase activity toward beta-hydroxyamino acids, producing glycine and aldehydes, via a retro-aldol mechanism. The polypeptide is Serine hydroxymethyltransferase (Phytoplasma mali (strain AT)).